We begin with the raw amino-acid sequence, 188 residues long: Inosine triphosphate pyrophosphatase (188 aa).

9–14 (TGNAKK) is an ITP binding site. Glutamate 39 contacts Mg(2+). ITP is bound by residues lysine 51, 67-68 (DT), lysine 84, 143-146 (FGWD), lysine 166, and 171-172 (HR).

Belongs to the HAM1 NTPase family. Homodimer. The cofactor is Mg(2+). Mn(2+) serves as cofactor.

The protein resides in the cytoplasm. It catalyses the reaction ITP + H2O = IMP + diphosphate + H(+). It carries out the reaction dITP + H2O = dIMP + diphosphate + H(+). The enzyme catalyses XTP + H2O = XMP + diphosphate + H(+). Its function is as follows. Pyrophosphatase that hydrolyzes non-canonical purine nucleotides such as inosine triphosphate (ITP), deoxyinosine triphosphate (dITP) or xanthosine 5'-triphosphate (XTP) to their respective monophosphate derivatives. The enzyme does not distinguish between the deoxy- and ribose forms. Probably excludes non-canonical purines from RNA and DNA precursor pools, thus preventing their incorporation into RNA and DNA and avoiding chromosomal lesions. The sequence is that of Inosine triphosphate pyrophosphatase from Aedes aegypti (Yellowfever mosquito).